Consider the following 366-residue polypeptide: Peptide chain release factor 1 (366 aa).

Q239 is subject to N5-methylglutamine.

The protein belongs to the prokaryotic/mitochondrial release factor family. Methylated by PrmC. Methylation increases the termination efficiency of RF1.

It is found in the cytoplasm. Its function is as follows. Peptide chain release factor 1 directs the termination of translation in response to the peptide chain termination codons UAG and UAA. This chain is Peptide chain release factor 1, found in Albidiferax ferrireducens (strain ATCC BAA-621 / DSM 15236 / T118) (Rhodoferax ferrireducens).